Consider the following 78-residue polypeptide: MSEAEIKDKVYDIIVSKMGVNKDQIKPESKFSDDLGADSLDTVELIMELENEFGVQIPDEDAEKISTVQQAIDYIVKK.

The Carrier domain occupies 4–78 (AEIKDKVYDI…QQAIDYIVKK (75 aa)). S39 is subject to O-(pantetheine 4'-phosphoryl)serine.

The protein belongs to the acyl carrier protein (ACP) family. 4'-phosphopantetheine is transferred from CoA to a specific serine of apo-ACP by AcpS. This modification is essential for activity because fatty acids are bound in thioester linkage to the sulfhydryl of the prosthetic group.

The protein resides in the cytoplasm. Its pathway is lipid metabolism; fatty acid biosynthesis. Functionally, carrier of the growing fatty acid chain in fatty acid biosynthesis. This Chlorobium limicola (strain DSM 245 / NBRC 103803 / 6330) protein is Acyl carrier protein.